We begin with the raw amino-acid sequence, 247 residues long: tRNA pseudouridine synthase A (247 aa).

The active-site Nucleophile is the D52. A substrate-binding site is contributed by Y111.

It belongs to the tRNA pseudouridine synthase TruA family. Homodimer.

It carries out the reaction uridine(38/39/40) in tRNA = pseudouridine(38/39/40) in tRNA. Functionally, formation of pseudouridine at positions 38, 39 and 40 in the anticodon stem and loop of transfer RNAs. The polypeptide is tRNA pseudouridine synthase A (Caulobacter vibrioides (strain ATCC 19089 / CIP 103742 / CB 15) (Caulobacter crescentus)).